Consider the following 123-residue polypeptide: Proteasome assembly chaperone 4 (123 aa).

Belongs to the PSMG4 family. As to quaternary structure, interacts with PSMG3. Associates with alpha subunits of the 20S proteasome.

Chaperone protein which promotes assembly of the 20S proteasome. The sequence is that of Proteasome assembly chaperone 4 from Homo sapiens (Human).